A 433-amino-acid polypeptide reads, in one-letter code: Enolase (433 aa).

Q167 lines the (2R)-2-phosphoglycerate pocket. E209 serves as the catalytic Proton donor. Residues D246, E291, and D318 each contribute to the Mg(2+) site. The (2R)-2-phosphoglycerate site is built by K343, R372, S373, and K394. K343 serves as the catalytic Proton acceptor.

The protein belongs to the enolase family. As to quaternary structure, component of the RNA degradosome, a multiprotein complex involved in RNA processing and mRNA degradation. Requires Mg(2+) as cofactor.

It is found in the cytoplasm. The protein resides in the secreted. It localises to the cell surface. It carries out the reaction (2R)-2-phosphoglycerate = phosphoenolpyruvate + H2O. Its pathway is carbohydrate degradation; glycolysis; pyruvate from D-glyceraldehyde 3-phosphate: step 4/5. Functionally, catalyzes the reversible conversion of 2-phosphoglycerate (2-PG) into phosphoenolpyruvate (PEP). It is essential for the degradation of carbohydrates via glycolysis. This Hamiltonella defensa subsp. Acyrthosiphon pisum (strain 5AT) protein is Enolase.